A 94-amino-acid chain; its full sequence is Large ribosomal subunit protein uL23 (94 aa).

This sequence belongs to the universal ribosomal protein uL23 family. As to quaternary structure, part of the 50S ribosomal subunit. Contacts protein L29, and trigger factor when it is bound to the ribosome.

Its function is as follows. One of the early assembly proteins it binds 23S rRNA. One of the proteins that surrounds the polypeptide exit tunnel on the outside of the ribosome. Forms the main docking site for trigger factor binding to the ribosome. The polypeptide is Large ribosomal subunit protein uL23 (Exiguobacterium sibiricum (strain DSM 17290 / CCUG 55495 / CIP 109462 / JCM 13490 / 255-15)).